Consider the following 83-residue polypeptide: Sulfur carrier protein TusA (83 aa).

Cys19 acts as the Cysteine persulfide intermediate in catalysis.

Belongs to the sulfur carrier protein TusA family.

It is found in the cytoplasm. Functionally, sulfur carrier protein which probably makes part of a sulfur-relay system. This is Sulfur carrier protein TusA from Aliivibrio salmonicida (strain LFI1238) (Vibrio salmonicida (strain LFI1238)).